The chain runs to 94 residues: MEITDVRIRKIDSEGKMKAVVSVTFDNEFVVHDIKVIESQNGLFIAMPSRKAPDGEFRDIAHPINAETRSKIQTAILDKYESICAGSTETEGNN.

Belongs to the SpoVG family.

Functionally, could be involved in septation. The sequence is that of Putative septation protein SpoVG from Acetivibrio thermocellus (strain ATCC 27405 / DSM 1237 / JCM 9322 / NBRC 103400 / NCIMB 10682 / NRRL B-4536 / VPI 7372) (Clostridium thermocellum).